A 104-amino-acid polypeptide reads, in one-letter code: U20-lycotoxin-Ls1c (104 aa).

The signal sequence occupies residues 1 to 30; sequence MFSTSDQVSKMNSRILSALLILGIATCVIA. The WAP domain occupies 31 to 76; the sequence is GGFCPKSRHPQCDLSYKINDCCAQSDCRVGSVCCVEGCGNVCRAES. 5 cysteine pairs are disulfide-bonded: Cys34/Cys64, Cys42/Cys68, Cys51/Cys63, Cys52/Cys90, and Cys57/Cys72.

Belongs to the venom protein 11 family. 02 (wap-2) subfamily. Contains 5 disulfide bonds. As to expression, expressed by the venom gland.

The protein resides in the secreted. Functionally, has antibacterial activity. The polypeptide is U20-lycotoxin-Ls1c (Lycosa singoriensis (Wolf spider)).